Here is a 96-residue protein sequence, read N- to C-terminus: Co-chaperonin GroES (96 aa).

The protein belongs to the GroES chaperonin family. Heptamer of 7 subunits arranged in a ring. Interacts with the chaperonin GroEL.

It localises to the cytoplasm. Functionally, together with the chaperonin GroEL, plays an essential role in assisting protein folding. The GroEL-GroES system forms a nano-cage that allows encapsulation of the non-native substrate proteins and provides a physical environment optimized to promote and accelerate protein folding. GroES binds to the apical surface of the GroEL ring, thereby capping the opening of the GroEL channel. The polypeptide is Co-chaperonin GroES (Paraburkholderia phytofirmans (strain DSM 17436 / LMG 22146 / PsJN) (Burkholderia phytofirmans)).